The primary structure comprises 294 residues: MLGDLFTKPKKRKYATIPSDGTKADVPEGIMTKCPECKKIMYTKELQKNLMVCNYCGFHHPIGAKARIDMLVDEGSFEEIDASLTTANPLGFEDYMDRIEKDKQKSGLNEAIVTGHATIDGNPLVIAVMDSRFRMASMGSVVGEKIFRAVEDADKTNKPFVIFTASGGARMQEGMLSLMQMAKTSAAFKRFSNHGGLIITVMTHPTTGGVSASFASLGDYNFAEPGALIGFAGRRVIEQTVREELPEDFQTSEFLLKHGQLDDCISRLDLQNKLSFILSIHVKTPEVGGEADGE.

A CoA carboxyltransferase N-terminal domain is found at 30–294 (IMTKCPECKK…PEVGGEADGE (265 aa)). Zn(2+) contacts are provided by Cys-34, Cys-37, Cys-53, and Cys-56. The segment at 34–56 (CPECKKIMYTKELQKNLMVCNYC) adopts a C4-type zinc-finger fold.

This sequence belongs to the AccD/PCCB family. In terms of assembly, acetyl-CoA carboxylase is a heterohexamer composed of biotin carboxyl carrier protein (AccB), biotin carboxylase (AccC) and two subunits each of ACCase subunit alpha (AccA) and ACCase subunit beta (AccD). Zn(2+) is required as a cofactor.

It localises to the cytoplasm. It catalyses the reaction N(6)-carboxybiotinyl-L-lysyl-[protein] + acetyl-CoA = N(6)-biotinyl-L-lysyl-[protein] + malonyl-CoA. It participates in lipid metabolism; malonyl-CoA biosynthesis; malonyl-CoA from acetyl-CoA: step 1/1. Component of the acetyl coenzyme A carboxylase (ACC) complex. Biotin carboxylase (BC) catalyzes the carboxylation of biotin on its carrier protein (BCCP) and then the CO(2) group is transferred by the transcarboxylase to acetyl-CoA to form malonyl-CoA. The sequence is that of Acetyl-coenzyme A carboxylase carboxyl transferase subunit beta from Listeria monocytogenes serotype 4b (strain F2365).